The sequence spans 398 residues: Phosphoglycerate kinase (398 aa).

Residues 20–22, Arg-35, 58–61, Arg-118, and Arg-155 each bind substrate; these read DFN and HLGK. Residues Lys-208, Gly-296, Glu-327, and 354–357 contribute to the ATP site; that span reads GGDS.

Belongs to the phosphoglycerate kinase family. In terms of assembly, monomer.

The protein localises to the cytoplasm. It carries out the reaction (2R)-3-phosphoglycerate + ATP = (2R)-3-phospho-glyceroyl phosphate + ADP. Its pathway is carbohydrate degradation; glycolysis; pyruvate from D-glyceraldehyde 3-phosphate: step 2/5. This Fusobacterium nucleatum subsp. nucleatum (strain ATCC 25586 / DSM 15643 / BCRC 10681 / CIP 101130 / JCM 8532 / KCTC 2640 / LMG 13131 / VPI 4355) protein is Phosphoglycerate kinase.